We begin with the raw amino-acid sequence, 428 residues long: Enolase (428 aa).

A (2R)-2-phosphoglycerate-binding site is contributed by glutamine 164. Glutamate 206 functions as the Proton donor in the catalytic mechanism. The Mg(2+) site is built by aspartate 243, glutamate 286, and aspartate 313. Residues lysine 338, arginine 367, serine 368, and lysine 389 each coordinate (2R)-2-phosphoglycerate. The Proton acceptor role is filled by lysine 338.

This sequence belongs to the enolase family. Mg(2+) serves as cofactor.

Its subcellular location is the cytoplasm. The protein localises to the secreted. It is found in the cell surface. It catalyses the reaction (2R)-2-phosphoglycerate = phosphoenolpyruvate + H2O. The protein operates within carbohydrate degradation; glycolysis; pyruvate from D-glyceraldehyde 3-phosphate: step 4/5. Its function is as follows. Catalyzes the reversible conversion of 2-phosphoglycerate (2-PG) into phosphoenolpyruvate (PEP). It is essential for the degradation of carbohydrates via glycolysis. The sequence is that of Enolase from Dehalococcoides mccartyi (strain ATCC BAA-2100 / JCM 16839 / KCTC 5957 / BAV1).